The primary structure comprises 165 residues: Keratin-associated protein 5-7 (165 aa).

Repeat copies occupy residues 35-38, 41-44, 47-50, 116-119, 126-129, 145-148, and 155-158. The tract at residues 35–158 is 7 X 4 AA repeats of C-C-X-P; sequence CCVPVCCCKP…CCSQSSCCVP (124 aa).

This sequence belongs to the KRTAP type 5 family. Interacts with hair keratins. As to expression, expressed in hair root but not in skin.

Functionally, in the hair cortex, hair keratin intermediate filaments are embedded in an interfilamentous matrix, consisting of hair keratin-associated protein (KRTAP), which are essential for the formation of a rigid and resistant hair shaft through their extensive disulfide bond cross-linking with abundant cysteine residues of hair keratins. The matrix proteins include the high-sulfur and high-glycine-tyrosine keratins. The protein is Keratin-associated protein 5-7 (KRTAP5-7) of Homo sapiens (Human).